Consider the following 366-residue polypeptide: Aminomethyltransferase (366 aa).

It belongs to the GcvT family. In terms of assembly, the glycine cleavage system is composed of four proteins: P, T, L and H.

The catalysed reaction is N(6)-[(R)-S(8)-aminomethyldihydrolipoyl]-L-lysyl-[protein] + (6S)-5,6,7,8-tetrahydrofolate = N(6)-[(R)-dihydrolipoyl]-L-lysyl-[protein] + (6R)-5,10-methylene-5,6,7,8-tetrahydrofolate + NH4(+). The glycine cleavage system catalyzes the degradation of glycine. This is Aminomethyltransferase from Bacillus cereus (strain 03BB102).